A 274-amino-acid polypeptide reads, in one-letter code: Subtilisin DY (274 aa).

Residue Gln2 participates in Ca(2+) binding. The region spanning 5-273 is the Peptidase S8 domain; the sequence is PYGIPLIKAD…KGLINVEAAA (269 aa). The active-site Charge relay system is Asp32. Asp41 contacts Ca(2+). The Charge relay system role is filled by His63. Residues Leu74, Asn76, Val80, Ala168, Tyr170, and Val173 each contribute to the Ca(2+) site. Ser220 (charge relay system) is an active-site residue.

This sequence belongs to the peptidase S8 family. Ca(2+) is required as a cofactor.

The protein localises to the secreted. The catalysed reaction is Hydrolysis of proteins with broad specificity for peptide bonds, and a preference for a large uncharged residue in P1. Hydrolyzes peptide amides.. Functionally, subtilisin is an extracellular alkaline serine protease, it catalyzes the hydrolysis of proteins and peptide amides. In Bacillus licheniformis, this protein is Subtilisin DY (apr).